A 274-amino-acid polypeptide reads, in one-letter code: Large ribosomal subunit protein uL2 (274 aa).

Residues 224-256 (VMNPVDHPHGGGEGKTGEGRHPVDPWGNLTKGY) form a disordered region. Residues 229–246 (DHPHGGGEGKTGEGRHPV) are compositionally biased toward basic and acidic residues.

This sequence belongs to the universal ribosomal protein uL2 family. In terms of assembly, part of the 50S ribosomal subunit. Forms a bridge to the 30S subunit in the 70S ribosome.

Its function is as follows. One of the primary rRNA binding proteins. Required for association of the 30S and 50S subunits to form the 70S ribosome, for tRNA binding and peptide bond formation. It has been suggested to have peptidyltransferase activity; this is somewhat controversial. Makes several contacts with the 16S rRNA in the 70S ribosome. The sequence is that of Large ribosomal subunit protein uL2 from Polaromonas sp. (strain JS666 / ATCC BAA-500).